The sequence spans 131 residues: Profilin-4 (131 aa).

Cysteine 13 and cysteine 115 are joined by a disulfide. The short motif at 81–97 is the Involved in PIP2 interaction element; sequence AVIRGKKGAGGITIKKT. Threonine 111 carries the phosphothreonine modification.

This sequence belongs to the profilin family. Occurs in many kinds of cells as a complex with monomeric actin in a 1:1 ratio. Phosphorylated by MAP kinases.

It is found in the cytoplasm. Its subcellular location is the cytoskeleton. Binds to actin and affects the structure of the cytoskeleton. At high concentrations, profilin prevents the polymerization of actin, whereas it enhances it at low concentrations. The chain is Profilin-4 from Phleum pratense (Common timothy).